The chain runs to 215 residues: Endonuclease III (215 aa).

A HhH domain is found at 113-132; it reads REDLESLPGVGRKTANVILN. C192, C199, C202, and C208 together coordinate [4Fe-4S] cluster.

Belongs to the Nth/MutY family. The cofactor is [4Fe-4S] cluster.

The enzyme catalyses 2'-deoxyribonucleotide-(2'-deoxyribose 5'-phosphate)-2'-deoxyribonucleotide-DNA = a 3'-end 2'-deoxyribonucleotide-(2,3-dehydro-2,3-deoxyribose 5'-phosphate)-DNA + a 5'-end 5'-phospho-2'-deoxyribonucleoside-DNA + H(+). DNA repair enzyme that has both DNA N-glycosylase activity and AP-lyase activity. The DNA N-glycosylase activity releases various damaged pyrimidines from DNA by cleaving the N-glycosidic bond, leaving an AP (apurinic/apyrimidinic) site. The AP-lyase activity cleaves the phosphodiester bond 3' to the AP site by a beta-elimination, leaving a 3'-terminal unsaturated sugar and a product with a terminal 5'-phosphate. In Buchnera aphidicola subsp. Baizongia pistaciae (strain Bp), this protein is Endonuclease III.